The following is a 48-amino-acid chain: Large ribosomal subunit protein bL32 (48 aa).

Residues 1–20 show a composition bias toward basic residues; that stretch reads MAVPKRRVSKTRAAKRRTHY. Positions 1-48 are disordered; sequence MAVPKRRVSKTRAAKRRTHYKVSLPMPVKDKDGSYKMPHRANPTTKEY.

This sequence belongs to the bacterial ribosomal protein bL32 family.

The polypeptide is Large ribosomal subunit protein bL32 (Campylobacter jejuni subsp. doylei (strain ATCC BAA-1458 / RM4099 / 269.97)).